Reading from the N-terminus, the 233-residue chain is Ribosomal RNA small subunit methyltransferase G (233 aa).

S-adenosyl-L-methionine contacts are provided by residues glycine 96, leucine 101, 146-147 (LE), and arginine 160.

This sequence belongs to the methyltransferase superfamily. RNA methyltransferase RsmG family.

It localises to the cytoplasm. The enzyme catalyses guanosine(527) in 16S rRNA + S-adenosyl-L-methionine = N(7)-methylguanosine(527) in 16S rRNA + S-adenosyl-L-homocysteine. Specifically methylates the N7 position of guanine in position 527 of 16S rRNA. This is Ribosomal RNA small subunit methyltransferase G from Sphingopyxis alaskensis (strain DSM 13593 / LMG 18877 / RB2256) (Sphingomonas alaskensis).